The sequence spans 445 residues: Probable histidine--tRNA ligase, cytoplasmic (445 aa).

The protein belongs to the class-II aminoacyl-tRNA synthetase family.

It is found in the cytoplasm. It catalyses the reaction tRNA(His) + L-histidine + ATP = L-histidyl-tRNA(His) + AMP + diphosphate + H(+). The sequence is that of Probable histidine--tRNA ligase, cytoplasmic from Antonospora locustae (Microsporidian parasite).